The sequence spans 332 residues: Putative symporter YfeH (332 aa).

Belongs to the bile acid:sodium symporter (BASS) (TC 2.A.28) family.

The sequence is that of Putative symporter YfeH (yfeH) from Escherichia coli (strain K12).